The chain runs to 228 residues: 7-cyano-7-deazaguanine synthase (228 aa).

9–19 (LSGGPDSTTVL) contacts ATP. Residues C193, C203, C206, and C209 each coordinate Zn(2+).

The protein belongs to the QueC family. The cofactor is Zn(2+).

The enzyme catalyses 7-carboxy-7-deazaguanine + NH4(+) + ATP = 7-cyano-7-deazaguanine + ADP + phosphate + H2O + H(+). The protein operates within purine metabolism; 7-cyano-7-deazaguanine biosynthesis. Its function is as follows. Catalyzes the ATP-dependent conversion of 7-carboxy-7-deazaguanine (CDG) to 7-cyano-7-deazaguanine (preQ(0)). The sequence is that of 7-cyano-7-deazaguanine synthase from Rickettsia rickettsii (strain Iowa).